Consider the following 464-residue polypeptide: MRESEDSPSPKRQRLSHSVFDYTSASPAPSPPMRPWEMTSNRQPPSVRPNQHHFSGERCNTPARNRRSPPVRRQRGRRERLSRHNSISQDENYHHLPYAQQQAIEEPRAFHPPNVSPRLLHPAAHPPQQNAVMVDIHDQLHQGTVPVSYTVTTVAPHGLPLCTGQHIPACSTQQVPGCSVVFSGQHLPVCSVPPPMLQACSVQHLPVPYAAFPPLISSDPFLIHPPHLSPHHPPHLPPPGQFVPFQTQQSRSPLQRIENEVELLGEHLQVGSFTYPPSAHPPTLPPSAPLQFLTHDPLHQEVSFGVPYPPFMPRRLTGRSRYRSQQPMPPPPYHPSLLPYVLSMLPVPPAVGPTFSFELDVEDGEVENYEALLNLAERLGEAKPRGLTKADIEQLPSYRFNPSNHQSEQTLCVVCMCDFESRQLLRVLPCNHEFHAKCVDKWLKGNRTCPICRADASEVHRDSE.

Residues 1–94 (MRESEDSPSP…NSISQDENYH (94 aa)) form a disordered region. The Bipartite nuclear localization signal 1 motif lies at 6–20 (DSPSPKRQRLSHSVF). A compositionally biased stretch (polar residues) spans 38-53 (MTSNRQPPSVRPNQHH). Positions 64 to 79 (RNRRSPPVRRQRGRRE) match the Bipartite nuclear localization signal 2 motif. The segment covering 64–83 (RNRRSPPVRRQRGRRERLSR) has biased composition (basic residues). The RING-type zinc-finger motif lies at 412 to 453 (CVVCMCDFESRQLLRVLPCNHEFHAKCVDKWLKGNRTCPICR).

The protein localises to the nucleus. The enzyme catalyses S-ubiquitinyl-[E2 ubiquitin-conjugating enzyme]-L-cysteine + [acceptor protein]-L-lysine = [E2 ubiquitin-conjugating enzyme]-L-cysteine + N(6)-ubiquitinyl-[acceptor protein]-L-lysine.. Its pathway is protein modification; protein ubiquitination. Its function is as follows. Acts as an E3 ubiquitin-protein ligase able to ubiquitinate p53/TP53 which promotes its relocalization to discrete foci associated with PML nuclear bodies. Exhibits preference for UBE2D2 as a E2 enzyme. This Mus musculus (Mouse) protein is E3 ubiquitin-protein ligase RNF38.